Here is a 143-residue protein sequence, read N- to C-terminus: Periplasmic nitrate reductase, electron transfer subunit (143 aa).

Residues 1–22 (MKKILTLAAIVLAIGGCSGQQA) form the signal peptide. Heme c-binding residues include H72, C85, C88, H89, H106, C121, C124, and H125.

This sequence belongs to the NapB family. As to quaternary structure, component of the periplasmic nitrate reductase NapAB complex composed of NapA and NapB. Binds 2 heme C groups per subunit.

The protein resides in the periplasm. Functionally, electron transfer subunit of the periplasmic nitrate reductase complex NapAB. Receives electrons from the membrane-anchored tetraheme c-type CymA protein and transfers these to NapA subunit, thus allowing electron flow between membrane and periplasm. Not essential for nitrate reduction but confers advantage to the organism when grown on nitrate and thereby a fitness gain in utilizing nitrate. In Shewanella oneidensis (strain ATCC 700550 / JCM 31522 / CIP 106686 / LMG 19005 / NCIMB 14063 / MR-1), this protein is Periplasmic nitrate reductase, electron transfer subunit.